Consider the following 320-residue polypeptide: uncharacterized protein (320 aa).

The tract at residues 196 to 273 (VVPEYDFDSE…RSKNNSNTTK (78 aa)) is disordered. Acidic residues predominate over residues 200–210 (YDFDSESESDN). Positions 211-226 (SEEKRFVPVLETEKAP) are enriched in basic and acidic residues. The segment covering 248-273 (QPKNPKQTTLKNTLDTRSKNNSNTTK) has biased composition (polar residues).

This is an uncharacterized protein from Acanthamoeba polyphaga mimivirus (APMV).